We begin with the raw amino-acid sequence, 229 residues long: Ribonuclease 3 (229 aa).

Positions 5–127 constitute an RNase III domain; the sequence is LAGLERKLGY…LIGAIYLDAD (123 aa). Position 40 (Glu40) interacts with Mg(2+). Asp44 is a catalytic residue. Asp113 and Glu116 together coordinate Mg(2+). Glu116 is a catalytic residue. The region spanning 154–224 is the DRBM domain; sequence DPKTRLQEFL…AASALIALGV (71 aa).

It belongs to the ribonuclease III family. In terms of assembly, homodimer. It depends on Mg(2+) as a cofactor.

It is found in the cytoplasm. It catalyses the reaction Endonucleolytic cleavage to 5'-phosphomonoester.. Functionally, digests double-stranded RNA. Involved in the processing of primary rRNA transcript to yield the immediate precursors to the large and small rRNAs (23S and 16S). Processes some mRNAs, and tRNAs when they are encoded in the rRNA operon. Processes pre-crRNA and tracrRNA of type II CRISPR loci if present in the organism. The protein is Ribonuclease 3 of Pseudomonas putida (strain ATCC 700007 / DSM 6899 / JCM 31910 / BCRC 17059 / LMG 24140 / F1).